A 301-amino-acid chain; its full sequence is ATP synthase gamma chain (301 aa).

It belongs to the ATPase gamma chain family. F-type ATPases have 2 components, CF(1) - the catalytic core - and CF(0) - the membrane proton channel. CF(1) has five subunits: alpha(3), beta(3), gamma(1), delta(1), epsilon(1). CF(0) has three main subunits: a, b and c.

The protein resides in the cell inner membrane. Functionally, produces ATP from ADP in the presence of a proton gradient across the membrane. The gamma chain is believed to be important in regulating ATPase activity and the flow of protons through the CF(0) complex. The protein is ATP synthase gamma chain of Helicobacter pylori (strain G27).